Reading from the N-terminus, the 64-residue chain is MKTAELRDLDIEALGKKLGESREELFKLRFQHATAQLEKTHRLREVRKDIARIMTVQTEKKRQG.

Belongs to the universal ribosomal protein uL29 family.

The sequence is that of Large ribosomal subunit protein uL29 from Solidesulfovibrio magneticus (strain ATCC 700980 / DSM 13731 / RS-1) (Desulfovibrio magneticus).